Here is a 198-residue protein sequence, read N- to C-terminus: Calcium channel flower (198 aa).

The next 3 helical transmembrane spans lie at 36–56 (LGIV…LSII), 67–89 (IIQM…VCIE), and 114–134 (AVPP…GLIF).

This sequence belongs to the calcium channel flower family. Homomultimer. Associates with the dally/ magu complex.

The protein localises to the cell membrane. Its subcellular location is the cytoplasmic vesicle. It localises to the secretory vesicle. It is found in the synaptic vesicle membrane. The protein resides in the presynaptic cell membrane. The protein localises to the endosome. Its activity is regulated as follows. Channel activity is inhibited by La(3+), which reduces Ca(2+) influx and thus inhibits it's function in promoting activity-dependent bulk endocytosis (ADBE) in response to high stimuli. In terms of biological role, transmembrane protein which mediates synaptic endocytosis, fitness-based cell culling, neuronal culling, morphogen gradient scaling, and calcium transport. Regulates synaptic endocytosis and hence couples exo- with endocytosis. Controls two major modes of synaptic vesicle (SV) endocytosis in the synaptic boutons of neuromuscular junctions (NMJs); Ca(2+) channel-independent Clathrin-mediated endocytosis (CME) in response to mild stimulation, and Ca(2+) channel-dependent activity-dependent bulk endocytosis (ADBE) in response to strong stimulation. Functions in ADBE and subsequent SV reformation from bulk endosomes by initiating Ca(2+) channel-dependent phosphatidylinositol 4,5-bisphosphate (PtdIns(4,5)P2) compartmentalization in synaptic boutons. There it acts at the periactive zone to provide the low Ca(2+) levels required to initiate Calcineurin activation and upregulate PtdIns(4,5)P2. Conversely PtdIns(4,5)P2 enhances fwe Ca(2+) channel-activity, establishing a positive feedback loop that induces PtdIns(4,5)P2 microdomain at the periactive zone. These microdomains trigger bulk membrane invagination (i.e. ADBE) by triggering actin polymerization while also promoting localization of fwe to bulk endosomes, thereby removing the ADBE trigger to reduce endocytosis and prevent excess membrane uptake. PtdIns(4,5)P2 then promotes SV reformation from the bulk endosomes, to coordinate ADBE and subsequent SV reformation. Different combinations of the flower isoforms at the cell membrane are also required for the identification and elimination of suboptimal or supernumerary cells during development, regeneration, and adulthood. Required for the recognition and elimination of unfit cells in the developing wing during cell competition. In the developing pupal retina, mediates the elimination of unwanted postmitotic neurons, including supernumerary photoreceptor neurons that form at the periphery of the retina and are contained within incomplete ommatidia units. Also required for efficient elimination and replacement of old neurons by newly generated neurons during regeneration in the adult brain following mechanical injury. Downstream of the flower fitness fingerprints, cells identified as unwanted or unfit are eliminated via apoptosis through the expression of ahuizotl (azot). However, the cells marked for elimination by the flower isoforms only undergo apoptosis if additional thresholds are met; (1) their neighboring fit/healthy cells express different levels of the fwe isoforms, and (2) the levels of the protective signal SPARC expressed by the loser or unwanted cells are unable to inhibit caspase activation. These additional thresholds for flower-mediated apoptosis, allows useful cells to recover from transient and limited stress before they are unnecessarily eliminated. Functions with dally and magu in a mechanism of scaling, which utilises apoptosis to ensure that the dpp morphogen gradient, which mediates organ growth, remains proportional to the size of the growing wing. In this mechanism, fwe represses dally- and Magu-dependent activity in expanding the gradient, and dally/Magu inhibits fwe-dependent apoptosis to keep cell death rate low. When the levels of these different proteins are optimally regulated the gradient correctly scales with organ growth but when this fails, fwe-mediated apoptosis is activated to trim the developing tissue to match the correct size of the gradient. This chain is Calcium channel flower, found in Drosophila persimilis (Fruit fly).